Here is a 238-residue protein sequence, read N- to C-terminus: NAD-dependent protein deacylase (238 aa).

The Deacetylase sirtuin-type domain maps to 1 to 237; that stretch reads MRGIMKVFVL…PAWVERLLAR (237 aa). 12–31 provides a ligand contact to NAD(+); that stretch reads GAGVSAESGLGTFRDKDGVW. Residues Tyr56 and Arg59 each contribute to the substrate site. NAD(+) is bound at residue 94 to 97; the sequence is QNVD. The Proton acceptor role is filled by His112. The Zn(2+) site is built by Cys120, Cys123, Cys139, and Cys142. NAD(+) is bound by residues 179–181, 205–207, and Ala223; these read GTS and NLE.

This sequence belongs to the sirtuin family. Class III subfamily. The cofactor is Zn(2+).

The protein localises to the cytoplasm. It catalyses the reaction N(6)-acetyl-L-lysyl-[protein] + NAD(+) + H2O = 2''-O-acetyl-ADP-D-ribose + nicotinamide + L-lysyl-[protein]. It carries out the reaction N(6)-succinyl-L-lysyl-[protein] + NAD(+) + H2O = 2''-O-succinyl-ADP-D-ribose + nicotinamide + L-lysyl-[protein]. Its function is as follows. NAD-dependent lysine deacetylase and desuccinylase that specifically removes acetyl and succinyl groups on target proteins. Modulates the activities of several proteins which are inactive in their acylated form. In Caulobacter vibrioides (strain ATCC 19089 / CIP 103742 / CB 15) (Caulobacter crescentus), this protein is NAD-dependent protein deacylase.